A 78-amino-acid polypeptide reads, in one-letter code: Large ribosomal subunit protein bL28 (78 aa).

Residues 1–24 (MSKVCQVTGKRPASGNNVSHAHNK) form a disordered region.

The protein belongs to the bacterial ribosomal protein bL28 family.

The chain is Large ribosomal subunit protein bL28 from Nitrosococcus oceani (strain ATCC 19707 / BCRC 17464 / JCM 30415 / NCIMB 11848 / C-107).